Consider the following 485-residue polypeptide: Polyol:NADP oxidoreductase (485 aa).

It belongs to the mannitol dehydrogenase family.

The protein localises to the cytoplasm. The sequence is that of Polyol:NADP oxidoreductase (por) from Gluconobacter oxydans (strain 621H) (Gluconobacter suboxydans).